The primary structure comprises 181 residues: uncharacterized protein (181 aa).

Gly residues-rich tracts occupy residues 143 to 156 and 170 to 181; these read RRGG…GPRG and GPFGPGYRGPRF. The interval 143 to 181 is disordered; that stretch reads RRGGRYGDFGGPRGPRGPRNDGPFGPFGPFGPGYRGPRF.

As to quaternary structure, has been detected in a cytochrome bc1-aa3 supercomplex; its deletion however leaves complex activity unaffected.

This is an uncharacterized protein from Corynebacterium glutamicum (strain ATCC 13032 / DSM 20300 / JCM 1318 / BCRC 11384 / CCUG 27702 / LMG 3730 / NBRC 12168 / NCIMB 10025 / NRRL B-2784 / 534).